A 214-amino-acid polypeptide reads, in one-letter code: Phosphatidylserine decarboxylase proenzyme (214 aa).

The active-site Schiff-base intermediate with substrate; via pyruvic acid is Ser-182. A Pyruvic acid (Ser); by autocatalysis modification is found at Ser-182.

This sequence belongs to the phosphatidylserine decarboxylase family. PSD-A subfamily. As to quaternary structure, heterodimer of a large membrane-associated beta subunit and a small pyruvoyl-containing alpha subunit. Requires pyruvate as cofactor. Is synthesized initially as an inactive proenzyme. Formation of the active enzyme involves a self-maturation process in which the active site pyruvoyl group is generated from an internal serine residue via an autocatalytic post-translational modification. Two non-identical subunits are generated from the proenzyme in this reaction, and the pyruvate is formed at the N-terminus of the alpha chain, which is derived from the carboxyl end of the proenzyme. The post-translation cleavage follows an unusual pathway, termed non-hydrolytic serinolysis, in which the side chain hydroxyl group of the serine supplies its oxygen atom to form the C-terminus of the beta chain, while the remainder of the serine residue undergoes an oxidative deamination to produce ammonia and the pyruvoyl prosthetic group on the alpha chain.

Its subcellular location is the cell membrane. It catalyses the reaction a 1,2-diacyl-sn-glycero-3-phospho-L-serine + H(+) = a 1,2-diacyl-sn-glycero-3-phosphoethanolamine + CO2. The protein operates within phospholipid metabolism; phosphatidylethanolamine biosynthesis; phosphatidylethanolamine from CDP-diacylglycerol: step 2/2. Its function is as follows. Catalyzes the formation of phosphatidylethanolamine (PtdEtn) from phosphatidylserine (PtdSer). The chain is Phosphatidylserine decarboxylase proenzyme from Burkholderia multivorans (strain ATCC 17616 / 249).